The primary structure comprises 309 residues: Calcium homeostasis modulator protein 5 (309 aa).

Over 1–15 the chain is Cytoplasmic; sequence MDAFQGILKFFLNQK. A 1,2-diacyl-sn-glycero-3-phosphate is bound by residues Lys15, Arg32, and Val37. Residues 16–37 traverse the membrane as a helical segment; sequence TVIGYSFMALLTVGSERLFSVV. The Extracellular portion of the chain corresponds to 38-45; it reads AFKCPCST. 3 disulfides stabilise this stretch: Cys41–Cys127, Cys43–Cys158, and Cys142–Cys149. Residues 46 to 70 form a helical membrane-spanning segment; that stretch reads ENMTYGLVFLFAPAWVLLILGFFLN. Residues 71–99 lie on the Cytoplasmic side of the membrane; sequence NRSWRLFTGCCVNPRKIFPRGHSCRFFYV. The helical transmembrane segment at 100–129 threads the bilayer; that stretch reads LGQITLSSLVAPVMWLSVALLNGTFYECAM. 2 residues coordinate a 1,2-diacyl-sn-glycero-3-phosphate: Gln102 and Asn121. Residues 130–174 lie on the Extracellular side of the membrane; the sequence is SGTRSSGLLELICKGKPKECWEELHKVSCGKTSMLPTVNEELKLS. A helical transmembrane segment spans residues 175 to 200; sequence LQAQSQILGWCLICSASFFSLLTTCY. The Cytoplasmic segment spans residues 201 to 309; the sequence is ARCRSKVSYL…MVLVGTAHNM (109 aa). Arg202 is a binding site for a 1,2-diacyl-sn-glycero-3-phosphate.

This sequence belongs to the CALHM family. As to quaternary structure, oligomerizes to form undecameric cone-shaped channels.

The protein resides in the membrane. May assemble to form large pore channels with gating and ion conductance likely regulated by membrane lipids. The chain is Calcium homeostasis modulator protein 5 from Homo sapiens (Human).